Here is a 205-residue protein sequence, read N- to C-terminus: High frequency lysogenization protein HflD homolog (205 aa).

This sequence belongs to the HflD family.

The protein resides in the cytoplasm. It is found in the cell inner membrane. The protein is High frequency lysogenization protein HflD homolog of Shewanella baltica (strain OS223).